A 102-amino-acid chain; its full sequence is Large ribosomal subunit protein bL21 (102 aa).

The span at K80 to P91 shows a compositional bias: basic residues. The disordered stretch occupies residues K80–A102.

This sequence belongs to the bacterial ribosomal protein bL21 family. Part of the 50S ribosomal subunit. Contacts protein L20.

This protein binds to 23S rRNA in the presence of protein L20. The protein is Large ribosomal subunit protein bL21 of Staphylococcus aureus (strain Mu3 / ATCC 700698).